The following is a 150-amino-acid chain: Putative pre-16S rRNA nuclease (150 aa).

The protein belongs to the YqgF nuclease family.

The protein localises to the cytoplasm. In terms of biological role, could be a nuclease involved in processing of the 5'-end of pre-16S rRNA. This chain is Putative pre-16S rRNA nuclease, found in Protochlamydia amoebophila (strain UWE25).